A 581-amino-acid chain; its full sequence is Serine/threonine-protein kinase PINK1, mitochondrial (581 aa).

Residues 1 to 77 (MAVRQALGRG…RFFRQSVAGL (77 aa)) constitute a mitochondrion transit peptide. Residues 78–93 (AARLQRQFVVRAWGCA) are Mitochondrial intermembrane-facing. The chain crosses the membrane as a helical span at residues 94 to 110 (GPCGRAVFLAFGLGLGL). Residues 111-117 (IEEKQAE) are required for outer membrane localization. The Cytoplasmic portion of the chain corresponds to 111–581 (IEEKQAESRR…LLLCSWRAAL (471 aa)). The Protein kinase domain occupies 156–511 (YLIGQSIGKG…VAANVLHLSL (356 aa)). ATP-binding positions include 162-170 (IGKGCSAAV) and Lys-186. The interval 189 to 208 (GLLPGRGPGTSAPGEGQERA) is disordered. Ser-228 carries the post-translational modification Phosphoserine; by autocatalysis. Asp-362 serves as the catalytic Proton acceptor. Ser-402 bears the Phosphoserine; by autocatalysis mark.

It belongs to the protein kinase superfamily. Ser/Thr protein kinase family. As to quaternary structure, upon mitochondrial depolarization, it forms a supercomplex with TOM and TIM23 complexes. PINK1-TOM-TIM23 supercomplex formation requires PINK1 interaction with TOMM20 and TOMM70 and is critical for PINK1 stabilization at the outer mitochondrial membrane, kinase activation and downstream mitophagy. Upon mitochondrial depolarization, interacts with TIMM23; the interaction is required for PINK1 accumulation at the outer mitochondrial membrane, kinase activation by autophosphorylation and PRKN recruitement to mitochondria. Interacts with PRKN. Interacts with FBXO7. Forms a complex with PRKN and PARK7. Interacts with NENF. It depends on Mg(2+) as a cofactor. Proteolytically cleaved. In healthy cells, the precursor is continuously imported into the inner mitochondrial membrane (IMM), where it is proteolytically cleaved by mitochondrial-processing peptidase (MPP) and then undergoes further proteolytic cleavage by PARL or AFG3L2 to give rise to the 52 kDa short form. The 52 kDa short form is then released into the cytosol where it rapidly undergoes proteasome-dependent degradation. In unhealthy cells, when cellular stress conditions lead to the loss of mitochondrial membrane potential, mitochondrial import is impaired leading to the precursor accumulating on the outer mitochondrial membrane (OMM). If accumulation at the OMM fails and it is imported into the depolarized mitochondria, it undergoes cleavage by the IMM protease OMA1, promoting its subsequent degradation by the proteasome. Post-translationally, autophosphorylated. Loss of mitochondrial membrane potential results in the precursor accumulating on the outer mitochondrial membrane (OMM) where it is activated by autophosphorylation. Autophosphorylation at Ser-228 and Ser-402 is sufficient and essential for selective recruitment of PRKN to depolarized mitochondria, via PINK1-dependent phosphorylation of ubiquitin and maybe PRKN. As to expression, highly expressed in heart, skeletal muscle and testis, and at lower levels in brain, placenta, liver, kidney, pancreas, prostate, ovary and small intestine. Present in the embryonic testis from an early stage of development.

It is found in the mitochondrion outer membrane. The protein localises to the mitochondrion inner membrane. It localises to the cytoplasm. Its subcellular location is the cytosol. It carries out the reaction L-seryl-[protein] + ATP = O-phospho-L-seryl-[protein] + ADP + H(+). The enzyme catalyses L-threonyl-[protein] + ATP = O-phospho-L-threonyl-[protein] + ADP + H(+). Serine/threonine-protein kinase which acts as a sensor of mitochondrial damage and protects against mitochondrial dysfunction during cellular stress. It phosphorylates mitochondrial proteins to coordinate mitochondrial quality control mechanisms that remove and replace dysfunctional mitochondrial components. Depending on the severity of mitochondrial damage, activity ranges from preventing apoptosis and stimulating mitochondrial biogenesis to eliminating severely damaged mitochondria via PINK1-PRKN-dependent mitophagy. When cellular stress results in irreversible mitochondrial damage, PINK1 accumulates at the outer mitochondrial membrane (OMM) where it phosphorylates pre-existing polyubiquitin chains at 'Ser-65', recruits PRKN from the cytosol to the OMM and activates PRKN by phosphorylation at 'Ser-65'; activated PRKN then ubiquinates VDAC1 and other OMM proteins to initiate mitophagy. The PINK1-PRKN pathway also promotes fission of damaged mitochondria through phosphorylation and PRKN-dependent degradation of mitochondrial proteins involved in fission such as MFN2. This prevents the refusion of unhealthy mitochondria with the mitochondrial network or initiates mitochondrial fragmentation facilitating their later engulfment by autophagosomes. Also promotes mitochondrial fission independently of PRKN and ATG7-mediated mitophagy, via the phosphorylation and activation of DNM1L. Regulates motility of damaged mitochondria by promoting the ubiquitination and subsequent degradation of MIRO1 and MIRO2; in motor neurons, this likely inhibits mitochondrial intracellular anterograde transport along the axons which probably increases the chance of the mitochondria undergoing mitophagy in the soma. Required for ubiquinone reduction by mitochondrial complex I by mediating phosphorylation of complex I subunit NDUFA10. Phosphorylates LETM1, positively regulating its mitochondrial calcium transport activity. The protein is Serine/threonine-protein kinase PINK1, mitochondrial (PINK1) of Homo sapiens (Human).